We begin with the raw amino-acid sequence, 175 residues long: Heme-dependent oxidative N-demethylase delta subunit (175 aa).

As to quaternary structure, the heme-dependent oxidative N-demethylase (HODM) is a heterotetramer composed of a catalytic alpha subunit, a FMN/2Fe-2S-dependent oxidoreductase beta subunit, a gamma subunit with putative aminotransferase activity, and a delta subunit of unknown function.

In terms of biological role, component of the heme-dependent oxidative N-demethylase (HODM) enzyme, that catalyzes the NADPH-dependent oxidation of dimethylamine (DMA) to methylamine (MA) and formaldehyde. Functions in bacterial methylated amine catabolism, linking alkylamine oxidation to the tetrahydrofolate C1 pool. The function of the delta subunit is unknown. The sequence is that of Heme-dependent oxidative N-demethylase delta subunit from Ectopseudomonas mendocina (strain ymp) (Pseudomonas mendocina).